A 211-amino-acid chain; its full sequence is Shikimate kinase (211 aa).

The interval M1–T22 is disordered. Over residues S12–T22 the composition is skewed to polar residues. G36–T41 lines the ATP pocket. A Mg(2+)-binding site is contributed by T40. 3 residues coordinate substrate: D58, R82, and G104. R142 contributes to the ATP binding site. A substrate-binding site is contributed by R161. ATP is bound at residue Q178.

Belongs to the shikimate kinase family. In terms of assembly, monomer. Mg(2+) serves as cofactor.

The protein resides in the cytoplasm. The catalysed reaction is shikimate + ATP = 3-phosphoshikimate + ADP + H(+). Its pathway is metabolic intermediate biosynthesis; chorismate biosynthesis; chorismate from D-erythrose 4-phosphate and phosphoenolpyruvate: step 5/7. Catalyzes the specific phosphorylation of the 3-hydroxyl group of shikimic acid using ATP as a cosubstrate. This chain is Shikimate kinase, found in Nitrosomonas europaea (strain ATCC 19718 / CIP 103999 / KCTC 2705 / NBRC 14298).